A 90-amino-acid polypeptide reads, in one-letter code: MKAIEVDVFGLVQGVGFRWFAQRTAQQHNIVGWVSNQTDGSVKIHAQGSQSDLIDFLSVLEKGPGFYSRVDKVITTNIPLFETNDFAIRG.

Residues 3 to 90 (AIEVDVFGLV…FETNDFAIRG (88 aa)) form the Acylphosphatase-like domain. Active-site residues include Arg-18 and Asn-36.

Belongs to the acylphosphatase family.

It catalyses the reaction an acyl phosphate + H2O = a carboxylate + phosphate + H(+). In Leuconostoc mesenteroides subsp. mesenteroides (strain ATCC 8293 / DSM 20343 / BCRC 11652 / CCM 1803 / JCM 6124 / NCDO 523 / NBRC 100496 / NCIMB 8023 / NCTC 12954 / NRRL B-1118 / 37Y), this protein is Acylphosphatase (acyP).